The chain runs to 160 residues: Small ribosomal subunit protein uS7 (160 aa).

It belongs to the universal ribosomal protein uS7 family. In terms of assembly, part of the 30S ribosomal subunit. Contacts proteins S9 and S11.

One of the primary rRNA binding proteins, it binds directly to 16S rRNA where it nucleates assembly of the head domain of the 30S subunit. Is located at the subunit interface close to the decoding center, probably blocks exit of the E-site tRNA. The polypeptide is Small ribosomal subunit protein uS7 (Ehrlichia canis (strain Jake)).